The sequence spans 231 residues: 2,3-bisphosphoglycerate-dependent phosphoglycerate mutase (231 aa).

Substrate is bound by residues 10–17 (RHGQSEWN), 23–24 (TG), Arg-62, 89–92 (ERHY), Lys-100, 116–117 (RR), and 185–186 (GN). The active-site Tele-phosphohistidine intermediate is the His-11. Glu-89 acts as the Proton donor/acceptor in catalysis.

The protein belongs to the phosphoglycerate mutase family. BPG-dependent PGAM subfamily. In terms of assembly, homodimer.

It carries out the reaction (2R)-2-phosphoglycerate = (2R)-3-phosphoglycerate. It participates in carbohydrate degradation; glycolysis; pyruvate from D-glyceraldehyde 3-phosphate: step 3/5. In terms of biological role, catalyzes the interconversion of 2-phosphoglycerate and 3-phosphoglycerate. This is 2,3-bisphosphoglycerate-dependent phosphoglycerate mutase from Buchnera aphidicola subsp. Acyrthosiphon pisum (strain 5A).